We begin with the raw amino-acid sequence, 668 residues long: Probable metal-nicotianamine transporter YSL5 (668 aa).

A compositionally biased stretch (low complexity) spans 1-11 (MPPPETSSAAA). Positions 1–22 (MPPPETSSAAAPSPPSPDPLPP) are disordered. Over residues 12-22 (PSPPSPDPLPP) the composition is skewed to pro residues. The next 14 membrane-spanning stretches (helical) occupy residues 27-47 (LTLRGVAVAAVLGSLLCVVIH), 51-71 (LTVGVIPALNVASGLLAFFLA), 102-122 (CAIACGSLAFSGCSSSYIFAM), 147-167 (LGWMIGFMFLIALIGPFSIVM), 209-229 (LVKYMSLSFGWSFFKWFFSGV), 268-288 (IVNCSVFLGSVISWGFLWPFI), 315-335 (IAISVILGDGLYNLVKVFLII), 383-403 (LAVSGYIVLAAISTVAVPIIF), 410-430 (LVLVCYFLAPAIAFCNSYGMG), 443-463 (IALFVFASLVGSDGGVIAGLA), 501-521 (IGVALGCIIAPLTLWLFWTAF), 557-577 (LEICCVFFLAALIINLMKDVV), 595-615 (FYIGAYFGVDMFIGTLILFAW), and 633-653 (GLICGDGVWSIPSAVLSILGV).

This sequence belongs to the YSL (TC 2.A.67.2) family. Expressed in roots.

The protein resides in the membrane. In terms of biological role, may be involved in the transport of nicotianamine-chelated metals. The chain is Probable metal-nicotianamine transporter YSL5 (YSL5) from Oryza sativa subsp. japonica (Rice).